Consider the following 360-residue polypeptide: Peptide chain release factor 1 (360 aa).

Q235 carries the N5-methylglutamine modification.

This sequence belongs to the prokaryotic/mitochondrial release factor family. In terms of processing, methylated by PrmC. Methylation increases the termination efficiency of RF1.

The protein localises to the cytoplasm. Peptide chain release factor 1 directs the termination of translation in response to the peptide chain termination codons UAG and UAA. The protein is Peptide chain release factor 1 of Cupriavidus taiwanensis (strain DSM 17343 / BCRC 17206 / CCUG 44338 / CIP 107171 / LMG 19424 / R1) (Ralstonia taiwanensis (strain LMG 19424)).